The following is a 310-amino-acid chain: MDRKELLSKPVQDLRIDGNTTLSNLMAQFSNIGGFTAAKLYEAHSIISDMFLEDNTTFLSFPADIISTGLRGLINDVVKRKLVDVIITTSGTLDHDIARTFGKYYCGSFNYSDVELREININRLGNVLVPDESYGELIEEKVMEQLEKLYSIKKEWATVDLIKEIGLSINNESSILYNAAKNDIPIFVPGITDGSFGSQLWSFYEQHHDFKINLLEDEHRLSDIIFDAKKTGAIMVGGGISKHHTIWWNQFRDGLDYAVYITTAQEYDGSLSGAKLEEAISWKKVRPNARFVNIYGDATVIMPILMAPFL.

Lysine 284 functions as the Nucleophile in the catalytic mechanism.

This sequence belongs to the deoxyhypusine synthase family. NAD(+) is required as a cofactor.

It carries out the reaction [eIF5A protein]-L-lysine + spermidine = [eIF5A protein]-deoxyhypusine + propane-1,3-diamine. It functions in the pathway protein modification; eIF5A hypusination. Catalyzes the NAD-dependent oxidative cleavage of spermidine and the subsequent transfer of the butylamine moiety of spermidine to the epsilon-amino group of a specific lysine residue of the eIF-5A precursor protein to form the intermediate deoxyhypusine residue. This Thermoplasma volcanium (strain ATCC 51530 / DSM 4299 / JCM 9571 / NBRC 15438 / GSS1) protein is Probable deoxyhypusine synthase (dys).